The sequence spans 86 residues: Toxin To8 (86 aa).

An N-terminal signal peptide occupies residues 1 to 20; sequence MTRFVLFISCFFLIGMVVEC. Positions 21–83 constitute an LCN-type CS-alpha/beta domain; the sequence is KEGYLLGSRG…LWESDTNECG (63 aa). 4 disulfides stabilise this stretch: Cys31–Cys82, Cys35–Cys57, Cys43–Cys63, and Cys47–Cys65. At Cys82 the chain carries Cysteine amide.

Belongs to the long (4 C-C) scorpion toxin superfamily. Sodium channel inhibitor family. Beta subfamily. As to expression, expressed by the venom gland.

Its subcellular location is the secreted. In terms of biological role, beta toxins bind voltage-independently at site-4 of sodium channels (Nav) and shift the voltage of activation toward more negative potentials thereby affecting sodium channel activation and promoting spontaneous and repetitive firing. This is Toxin To8 from Tityus obscurus (Amazonian scorpion).